Here is a 499-residue protein sequence, read N- to C-terminus: Putative sodium-dependent excitatory amino acid transporter glt-4 (499 aa).

Topologically, residues 1–7 are cytoplasmic; that stretch reads MAKLSKE. 3 consecutive transmembrane segments (helical) span residues 8–28, 50–70, and 87–107; these read NLLL…GFSL, FVQM…ITSL, and IYYT…VSVI. N-linked (GlcNAc...) asparagine glycosylation occurs at Asn-165. Transmembrane regions (helical) follow at residues 194–217, 227–254, and 276–297; these read VSDG…IGVI, FFKS…TFLI, and ITVI…CVVL. The segment at residues 303–333 is an intramembrane region (discontinuously helical); that stretch reads IKFVGGMAQALLTALATSSSSATLPLSIKCC. Position 320–322 (320–322) interacts with L-aspartate; that stretch reads SSS. A helical transmembrane segment spans residues 343-369; that stretch reads VTRFVLPLGATINMDGTALYEAVAAIY. Gly-351, Thr-353, and Asn-355 together coordinate Na(+). L-aspartate contacts are provided by residues Thr-359, 400–404, Asp-433, and Asn-440; that span reads IPQAG. An intramembrane region (discontinuously helical) is located at residues 383–416; the sequence is VVLVSLTATLASIGAAGIPQAGIVTMIMVLIAIG. Residues 430-451 traverse the membrane as a helical segment; it reads FMLDRLRTTVNVHGDSIATAVI. Na(+) is bound by residues Asn-440 and Asp-444.

Belongs to the dicarboxylate/amino acid:cation symporter (DAACS) (TC 2.A.23) family.

It is found in the cell membrane. Sodium-dependent, high-affinity amino acid transporter that mediates the uptake of L-glutamate and also L-aspartate and D-aspartate. Functions as a symporter that transports one amino acid molecule together with two or three Na(+) ions and one proton, in parallel with the counter-transport of one K(+) ion. Mediates Cl(-) flux that is not coupled to amino acid transport; this avoids the accumulation of negative charges due to aspartate and Na(+) symport. The polypeptide is Putative sodium-dependent excitatory amino acid transporter glt-4 (glt-4) (Caenorhabditis elegans).